Here is a 150-residue protein sequence, read N- to C-terminus: 16.6 kDa heat shock protein (150 aa).

One can recognise a sHSP domain in the interval 31 to 150 (AERCPVLTNV…PQLKAIPISG (120 aa)).

This sequence belongs to the small heat shock protein (HSP20) family. May form oligomeric structures.

Its subcellular location is the cytoplasm. The chain is 16.6 kDa heat shock protein (HSP16.6) from Oryza sativa subsp. japonica (Rice).